A 289-amino-acid chain; its full sequence is Acetylglutamate kinase (289 aa).

Substrate is bound by residues 60–61 (GG), Arg-82, and Asn-186.

This sequence belongs to the acetylglutamate kinase family. ArgB subfamily.

It is found in the cytoplasm. It catalyses the reaction N-acetyl-L-glutamate + ATP = N-acetyl-L-glutamyl 5-phosphate + ADP. The protein operates within amino-acid biosynthesis; L-arginine biosynthesis; N(2)-acetyl-L-ornithine from L-glutamate: step 2/4. In terms of biological role, catalyzes the ATP-dependent phosphorylation of N-acetyl-L-glutamate. This chain is Acetylglutamate kinase, found in Methanoculleus marisnigri (strain ATCC 35101 / DSM 1498 / JR1).